We begin with the raw amino-acid sequence, 181 residues long: Peptidyl-tRNA hydrolase (181 aa).

Tyr-14 is a tRNA binding site. The active-site Proton acceptor is His-19. Residues Tyr-62, Asn-64, and Asn-108 each contribute to the tRNA site.

This sequence belongs to the PTH family. In terms of assembly, monomer.

It localises to the cytoplasm. The enzyme catalyses an N-acyl-L-alpha-aminoacyl-tRNA + H2O = an N-acyl-L-amino acid + a tRNA + H(+). Hydrolyzes ribosome-free peptidyl-tRNAs (with 1 or more amino acids incorporated), which drop off the ribosome during protein synthesis, or as a result of ribosome stalling. In terms of biological role, catalyzes the release of premature peptidyl moieties from peptidyl-tRNA molecules trapped in stalled 50S ribosomal subunits, and thus maintains levels of free tRNAs and 50S ribosomes. The sequence is that of Peptidyl-tRNA hydrolase from Campylobacter jejuni subsp. jejuni serotype O:2 (strain ATCC 700819 / NCTC 11168).